A 241-amino-acid chain; its full sequence is Sugar fermentation stimulation protein homolog (241 aa).

The protein belongs to the SfsA family.

This chain is Sugar fermentation stimulation protein homolog, found in Thermosynechococcus vestitus (strain NIES-2133 / IAM M-273 / BP-1).